A 469-amino-acid chain; its full sequence is MKHKVKNIHFVGIGGSGMSGIAEVLLNLGYTISGSDLGSNAATRRLVELGAKVTLGHAAENIASADAIVTSTAVQQDNPEVVAAREKHIPIVPRAMMLAELMRLRRGIAIAGTHGKTTTTSLVASVLAEGGLDPTFVIGGLLNSAGANAKLGAGEFIVAEADESDASFLNLSPVIEVITNIDADHMETYEHDFEKLKQAFVEFTQRLPFYGVAVLCLDDATVREIMPRISKLITTYGFHEDAMVRAVDAKAVDGHMQFTVIQDGYAPMQVSLNQPGMHNVQNACAAIAIARELGVSDHATQKALTEFTGVGRRFTRYGEISFSAVNDKPAGSFALVDDYGHHPVETAATISAARGAYPGRRLVLAFQPHRYTRTRDLFEDFVKVLSTTDMLLLAEVYAAGEQPIVAADGRTLAHALRVAGKVDPVFVEHIVDMPATIMNIVRDGDVVITMGAGSISGVPAKLKQMQDQV.

ATP is bound at residue Gly112–Thr118.

Belongs to the MurCDEF family.

The protein resides in the cytoplasm. The enzyme catalyses UDP-N-acetyl-alpha-D-muramate + L-alanine + ATP = UDP-N-acetyl-alpha-D-muramoyl-L-alanine + ADP + phosphate + H(+). The protein operates within cell wall biogenesis; peptidoglycan biosynthesis. Cell wall formation. In Herminiimonas arsenicoxydans, this protein is UDP-N-acetylmuramate--L-alanine ligase.